Consider the following 711-residue polypeptide: Double-stranded RNA-specific editase 1 (711 aa).

The interval 1 to 79 (MDIEDEENMS…RRKTPGPVLP (79 aa)) is disordered. Positions 63–73 (SKYRLKKRRKT) are enriched in basic residues. In terms of domain architecture, DRBM 1 spans 78–144 (LPKNALMQLN…AEKALRSFVQ (67 aa)). 2 interaction with substrate RNA regions span residues 83–88 (LMQLNE) and 104–105 (VH). S149 carries the post-translational modification Phosphoserine. Residues 176-220 (LFNGFETPDKSEPPFYVGSNGDDSFSSSGDVSLSASPVPASLTQP) are disordered. A compositionally biased stretch (low complexity) spans 192–213 (VGSNGDDSFSSSGDVSLSASPV). The 68-residue stretch at 231–298 (PSGKNPVMIL…AQSALATVFN (68 aa)) folds into the DRBM 2 domain. Interaction with substrate RNA stretches follow at residues 237–242 (VMILNE) and H259. Residues 370–707 (SVSTGTKCIN…VEKPTEQDQF (338 aa)) form the A to I editase domain. H394 contributes to the Zn(2+) binding site. E396 acts as the Proton donor in catalysis. 1D-myo-inositol hexakisphosphate-binding residues include R400 and R401. C451 and C526 together coordinate Zn(2+). 1D-myo-inositol hexakisphosphate is bound by residues K529, R532, K639, K672, K682, and K700.

In terms of assembly, homodimer. Homodimerization is essential for its catalytic activity. Can form heterodimers with isoform 5 of ADAR/ADAR1. 1D-myo-inositol hexakisphosphate serves as cofactor. Brain and peripheral tissues.

The protein resides in the nucleus. Its subcellular location is the nucleolus. The catalysed reaction is adenosine in double-stranded RNA + H2O + H(+) = inosine in double-stranded RNA + NH4(+). Its function is as follows. Catalyzes the hydrolytic deamination of adenosine to inosine in double-stranded RNA (dsRNA) referred to as A-to-I RNA editing. This may affect gene expression and function in a number of ways that include mRNA translation by changing codons and hence the amino acid sequence of proteins; pre-mRNA splicing by altering splice site recognition sequences; RNA stability by changing sequences involved in nuclease recognition; genetic stability in the case of RNA virus genomes by changing sequences during viral RNA replication; and RNA structure-dependent activities such as microRNA production or targeting or protein-RNA interactions. Can edit both viral and cellular RNAs and can edit RNAs at multiple sites (hyper-editing) or at specific sites (site-specific editing). Its cellular RNA substrates include: bladder cancer-associated protein (BLCAP), neurotransmitter receptors for glutamate (GRIA2 and GRIK2) and serotonin (HTR2C), GABA receptor (GABRA3) and potassium voltage-gated channel (KCNA1). Site-specific RNA editing of transcripts encoding these proteins results in amino acid substitutions which consequently alter their functional activities. Edits GRIA2 at both the Q/R and R/G sites efficiently but converts the adenosine in hotspot1 much less efficiently. Can inhibit cell proliferation and migration and can stimulate exocytosis. This is Double-stranded RNA-specific editase 1 (Adarb1) from Rattus norvegicus (Rat).